A 421-amino-acid polypeptide reads, in one-letter code: UDP-N-acetylglucosamine 1-carboxyvinyltransferase (421 aa).

Residue 22 to 23 participates in phosphoenolpyruvate binding; the sequence is KN. Residue Arg-91 coordinates UDP-N-acetyl-alpha-D-glucosamine. Cys-115 functions as the Proton donor in the catalytic mechanism. A 2-(S-cysteinyl)pyruvic acid O-phosphothioketal modification is found at Cys-115. Residues 120-124, 160-163, Asp-305, and Ile-327 each bind UDP-N-acetyl-alpha-D-glucosamine; these read RPVDL and KVSV.

Belongs to the EPSP synthase family. MurA subfamily.

It localises to the cytoplasm. The catalysed reaction is phosphoenolpyruvate + UDP-N-acetyl-alpha-D-glucosamine = UDP-N-acetyl-3-O-(1-carboxyvinyl)-alpha-D-glucosamine + phosphate. The protein operates within cell wall biogenesis; peptidoglycan biosynthesis. Its function is as follows. Cell wall formation. Adds enolpyruvyl to UDP-N-acetylglucosamine. The chain is UDP-N-acetylglucosamine 1-carboxyvinyltransferase from Photorhabdus laumondii subsp. laumondii (strain DSM 15139 / CIP 105565 / TT01) (Photorhabdus luminescens subsp. laumondii).